Here is an 80-residue protein sequence, read N- to C-terminus: Lantibiotic Flvalpha.a (80 aa).

Positions methionine 1 to alanine 38 are cleaved as a propeptide — cleaved by FlvT. 2,3-didehydrobutyrine; by FlvM1 occurs at positions 43 and 47. Residues threonine 52–cysteine 55 constitute a cross-link (beta-methyllanthionine (Thr-Cys); by FlvM1). The lanthionine (Ser-Cys); by FlvM1 cross-link spans serine 58–cysteine 68. 2 cross-links (beta-methyllanthionine (Thr-Cys); by FlvM1) span residues threonine 69–cysteine 74 and threonine 71–cysteine 78.

The lanthionine formed by Ser-58 and Cys-68 forms a putative lipid II binding motif. In terms of processing, maturation of FlvA1 peptides involves the enzymatic conversion of Thr, and Ser into dehydrated AA and the formation of thioether bonds with cysteines. Modifications are processed by the flavecin synthetase FlvM1. This is followed by membrane translocation and cleavage of the modified precursor. Post-translationally, contains DL-lanthionine and DL-beta-methyllanthionine, when coepressed in E.coli with the flavecin synthetase FlvM1.

Its subcellular location is the secreted. Lanthionine-containing peptide antibiotic (lantibiotic) only active on Gram-positive bacteria in synergy with Flvbeta peptides, which are encoded by the same operon than Flvalpha.a. Shows antibacterial activity in synergy with Flvbeta.b, Flvbeta.c, Flvbeta.e and Flvbeta.g. Does not show antibacterial activity when tested with Flvbeta.a, Flvbeta.d, Flvbeta.f and Flvbeta.h. The bactericidal activity of lantibiotics is based on depolarization of energized bacterial cytoplasmic membranes, initiated by the formation of aqueous transmembrane pores. This chain is Lantibiotic Flvalpha.a, found in Ruminococcus flavefaciens.